The following is a 185-amino-acid chain: uncharacterized protein (185 aa).

The next 5 membrane-spanning stretches (helical) occupy residues 4 to 24, 35 to 55, 60 to 80, 123 to 143, and 152 to 172; these read IAWMIVFCEIAFWVVIVLGLA, GLLFLALTPVIDLILLAATGV, GASATAAHGIAAVYIGISIAY, VLAYLIGAGLLAGMIYFINDS, and ILKLWTVIIGIDFLITASYFI.

The protein resides in the cell membrane. This is an uncharacterized protein from Bacillus subtilis (strain 168).